A 249-amino-acid chain; its full sequence is Methyl-coenzyme M reductase subunit gamma (249 aa).

A disordered region spans residues 43–62; the sequence is RAPGEEYPSVHPPLEELDEP. Coenzyme M is bound at residue Arg-120.

Belongs to the methyl-coenzyme M reductase gamma subunit family. As to quaternary structure, MCR is a hexamer of two alpha, two beta, and two gamma chains, forming a dimer of heterotrimers. Coenzyme F430 serves as cofactor.

The protein resides in the cytoplasm. The enzyme catalyses coenzyme B + methyl-coenzyme M = methane + coenzyme M-coenzyme B heterodisulfide. Its pathway is one-carbon metabolism; methyl-coenzyme M reduction; methane from methyl-coenzyme M: step 1/1. Component of the methyl-coenzyme M reductase (MCR) I that catalyzes the reductive cleavage of methyl-coenzyme M (CoM-S-CH3 or 2-(methylthio)ethanesulfonate) using coenzyme B (CoB or 7-mercaptoheptanoylthreonine phosphate) as reductant which results in the production of methane and the mixed heterodisulfide of CoB and CoM (CoM-S-S-CoB). This is the final step in methanogenesis. This Methanothermus fervidus protein is Methyl-coenzyme M reductase subunit gamma (mcrG).